The chain runs to 143 residues: Large-conductance mechanosensitive channel (143 aa).

3 consecutive transmembrane segments (helical) span residues valine 16–leucine 36, isoleucine 40–isoleucine 60, and glycine 87–valine 107.

It belongs to the MscL family. Homopentamer.

The protein resides in the cell inner membrane. In terms of biological role, channel that opens in response to stretch forces in the membrane lipid bilayer. May participate in the regulation of osmotic pressure changes within the cell. The protein is Large-conductance mechanosensitive channel of Psychrobacter sp. (strain PRwf-1).